We begin with the raw amino-acid sequence, 257 residues long: Synaptosomal-associated protein 29 (257 aa).

The segment at 1 to 42 (MSGYPKSYNPFDDDVEDEDTRPAPWKDARDLPDGPDPPIDRQ) is disordered. Over residues 20-32 (TRPAPWKDARDLP) the composition is skewed to basic and acidic residues. Serine 77, serine 78, serine 114, serine 163, serine 181, serine 203, and serine 209 each carry phosphoserine. The t-SNARE coiled-coil homology domain maps to 195-257 (RAYHQKIDSN…KSTEKKVRQL (63 aa)).

It belongs to the SNAP-25 family. In terms of assembly, forms a SNARE complex, composed of VAMP8, SNAP29 and STX17, involved in fusion of autophagosome with lysosome. Interacts with multiple syntaxins including STX6. Interacts with EIPR1. Interacts with STX17; this interaction is increased in the absence of TMEM39A. In terms of tissue distribution, widely expressed.

The protein resides in the cytoplasm. The protein localises to the golgi apparatus membrane. It localises to the cytoplasmic vesicle. Its subcellular location is the autophagosome membrane. It is found in the cell projection. The protein resides in the cilium membrane. In terms of biological role, SNAREs, soluble N-ethylmaleimide-sensitive factor-attachment protein receptors, are essential proteins for fusion of cellular membranes. SNAREs localized on opposing membranes assemble to form a trans-SNARE complex, an extended, parallel four alpha-helical bundle that drives membrane fusion. SNAP29 is a SNARE involved in autophagy through the direct control of autophagosome membrane fusion with the lysososome membrane. Also plays a role in ciliogenesis by regulating membrane fusions. The protein is Synaptosomal-associated protein 29 of Rattus norvegicus (Rat).